An 832-amino-acid chain; its full sequence is Protein P (832 aa).

Residues 1–177 (MPLSYQHFRR…FCGSPYSWEQ (177 aa)) form a terminal protein domain (TP) region. The tract at residues 178-335 (ELQHGAESFH…YCLSHIVNLL (158 aa)) is spacer. The interval 241 to 263 (RRPFGVEPSGSGHTTNLASKSAS) is disordered. A compositionally biased stretch (polar residues) spans 251-263 (SGHTTNLASKSAS). Positions 336 to 679 (EDWGPCAEHG…YLNLYPVARQ (344 aa)) are polymerase/reverse transcriptase domain (RT). In terms of domain architecture, Reverse transcriptase spans 346–589 (EHHIRIPRTP…YSLHFMGYVI (244 aa)). Mg(2+) contacts are provided by Asp418, Asp540, and Asp541.

The protein belongs to the hepadnaviridae P protein family.

It catalyses the reaction DNA(n) + a 2'-deoxyribonucleoside 5'-triphosphate = DNA(n+1) + diphosphate. The catalysed reaction is Endonucleolytic cleavage to 5'-phosphomonoester.. Its activity is regulated as follows. Activated by host HSP70 and HSP40 in vitro to be able to bind the epsilon loop of the pgRNA. Because deletion of the RNase H region renders the protein partly chaperone-independent, the chaperones may be needed indirectly to relieve occlusion of the RNA-binding site by this domain. Inhibited by several reverse-transcriptase inhibitors: Lamivudine, Adefovir and Entecavir. Functionally, multifunctional enzyme that converts the viral RNA genome into dsDNA in viral cytoplasmic capsids. This enzyme displays a DNA polymerase activity that can copy either DNA or RNA templates, and a ribonuclease H (RNase H) activity that cleaves the RNA strand of RNA-DNA heteroduplexes in a partially processive 3'- to 5'-endonucleasic mode. Neo-synthesized pregenomic RNA (pgRNA) are encapsidated together with the P protein, and reverse-transcribed inside the nucleocapsid. Initiation of reverse-transcription occurs first by binding the epsilon loop on the pgRNA genome, and is initiated by protein priming, thereby the 5'-end of (-)DNA is covalently linked to P protein. Partial (+)DNA is synthesized from the (-)DNA template and generates the relaxed circular DNA (RC-DNA) genome. After budding and infection, the RC-DNA migrates in the nucleus, and is converted into a plasmid-like covalently closed circular DNA (cccDNA). The activity of P protein does not seem to be necessary for cccDNA generation, and is presumably released from (+)DNA by host nuclear DNA repair machinery. This is Protein P from Homo sapiens (Human).